The following is a 33-amino-acid chain: Brevinin-2CDYb (33 aa).

The cysteines at positions 27 and 33 are disulfide-linked.

It belongs to the frog skin active peptide (FSAP) family. Brevinin subfamily. As to expression, expressed by the skin glands.

It is found in the secreted. Antimicrobial peptide. This chain is Brevinin-2CDYb, found in Rana dybowskii (Dybovsky's frog).